The primary structure comprises 468 residues: ATP synthase subunit beta 2 (468 aa).

145-152 (GGAGVGKT) contacts ATP.

It belongs to the ATPase alpha/beta chains family. F-type ATPases have 2 components, CF(1) - the catalytic core - and CF(0) - the membrane proton channel. CF(1) has five subunits: alpha(3), beta(3), gamma(1), delta(1), epsilon(1). CF(0) has three main subunits: a(1), b(2) and c(9-12). The alpha and beta chains form an alternating ring which encloses part of the gamma chain. CF(1) is attached to CF(0) by a central stalk formed by the gamma and epsilon chains, while a peripheral stalk is formed by the delta and b chains.

It localises to the cell membrane. It carries out the reaction ATP + H2O + 4 H(+)(in) = ADP + phosphate + 5 H(+)(out). Produces ATP from ADP in the presence of a proton gradient across the membrane. The catalytic sites are hosted primarily by the beta subunits. The sequence is that of ATP synthase subunit beta 2 from Mycoplasmopsis pulmonis (strain UAB CTIP) (Mycoplasma pulmonis).